Reading from the N-terminus, the 365-residue chain is Class I histocompatibility antigen, B alpha chain (365 aa).

Residues 1-24 (MTVMAPRTLLLLLSGALVLTETWA) form the signal peptide. The alpha-1 stretch occupies residues 25-114 (GSHSMRYFST…ALGYYNQSEA (90 aa)). Topologically, residues 25–308 (GSHSMRYFST…EPPSQPTIPI (284 aa)) are extracellular. Asn-110 carries N-linked (GlcNAc...) asparagine glycosylation. The alpha-2 stretch occupies residues 115 to 206 (GSHTIQMMSG…ENGKETLQRA (92 aa)). Intrachain disulfides connect Cys-125–Cys-188 and Cys-227–Cys-283. The alpha-3 stretch occupies residues 207-298 (EPPKTHVTHH…GLPEPLTLRW (92 aa)). The Ig-like C1-type domain maps to 209–297 (PKTHVTHHPV…EGLPEPLTLR (89 aa)). Positions 299-308 (EPPSQPTIPI) are connecting peptide. Residues 309–332 (MGIVAILAILGAVVTGAVVTAVMW) traverse the membrane as a helical segment. The Cytoplasmic portion of the chain corresponds to 333–365 (RKKSSDKKGGSYSQAARSDSAQGSDVSLTACKV). A disordered region spans residues 337-361 (SDKKGGSYSQAARSDSAQGSDVSLT). A compositionally biased stretch (polar residues) spans 346-359 (QAARSDSAQGSDVS). Phosphoserine is present on residues Ser-356 and Ser-359.

This sequence belongs to the MHC class I family. Heterodimer of an alpha chain and a beta chain (beta-2-microglobulin).

The protein resides in the membrane. In terms of biological role, involved in the presentation of foreign antigens to the immune system. This chain is Class I histocompatibility antigen, B alpha chain, found in Saguinus oedipus (Cotton-top tamarin).